The primary structure comprises 177 residues: uncharacterized protein (177 aa).

The protein belongs to the flavoredoxin family. The cofactor is FMN.

This is an uncharacterized protein from Archaeoglobus fulgidus (strain ATCC 49558 / DSM 4304 / JCM 9628 / NBRC 100126 / VC-16).